The primary structure comprises 232 residues: Vesicle transport through interaction with t-SNAREs homolog 1B (232 aa).

At alanine 2 the chain carries N-acetylalanine. Interaction with CLINT1 stretches follow at residues 2-23 (ATSAASSEHFEKLHEIFRGLLE) and 69-73 (APLTF). The Cytoplasmic segment spans residues 2-208 (ATSAASSEHF…SRKVITNKLL (207 aa)). Residues 36–98 (AGTEEKKKLV…AKLHREVRST (63 aa)) adopt a coiled-coil conformation. Position 103 is a phosphothreonine (threonine 103). The residue at position 107 (arginine 107) is an Omega-N-methylarginine. Phosphoserine is present on serine 138. The stretch at 160 to 201 (GSEIIEELGEQRDQLERTKSRLVNTNENLSKSRKILRSMSRK) forms a coiled coil. A helical; Anchor for type IV membrane protein transmembrane segment spans residues 209 to 229 (LSVIIVLELAILVGLVYYKFF). Residues 230-232 (RHH) lie on the Vesicular side of the membrane.

The protein belongs to the VTI1 family. As to quaternary structure, forms a SNARE complex with STX7, STX8 and VAMP8 which functions in the homotypic fusion of late endosomes. Component of the SNARE complex composed of STX7, STX8, VAMP7 and VIT1B that is required for heterotypic fusion of late endosomes with lysosomes. May interact with STX17. Interacts with CLINT1.

It localises to the early endosome membrane. The protein localises to the late endosome membrane. It is found in the lysosome membrane. Its subcellular location is the cytoplasmic granule. The protein resides in the recycling endosome membrane. Its function is as follows. V-SNARE that mediates vesicle transport pathways through interactions with t-SNAREs on the target membrane. These interactions are proposed to mediate aspects of the specificity of vesicle trafficking and to promote fusion of the lipid bilayers. The polypeptide is Vesicle transport through interaction with t-SNAREs homolog 1B (Vti1b) (Rattus norvegicus (Rat)).